The chain runs to 399 residues: Acetate kinase (399 aa).

Residue N7 participates in Mg(2+) binding. ATP is bound at residue K14. R91 provides a ligand contact to substrate. The Proton donor/acceptor role is filled by D148. ATP-binding positions include 208–212 (HLGNG), 283–285 (DFR), and 331–335 (GLGEN). E384 lines the Mg(2+) pocket.

It belongs to the acetokinase family. As to quaternary structure, homodimer. It depends on Mg(2+) as a cofactor. Requires Mn(2+) as cofactor.

It is found in the cytoplasm. It carries out the reaction acetate + ATP = acetyl phosphate + ADP. It participates in metabolic intermediate biosynthesis; acetyl-CoA biosynthesis; acetyl-CoA from acetate: step 1/2. Functionally, catalyzes the formation of acetyl phosphate from acetate and ATP. Can also catalyze the reverse reaction. This chain is Acetate kinase, found in Desulfitobacterium hafniense (strain Y51).